A 146-amino-acid polypeptide reads, in one-letter code: Transcription antitermination protein NusB (146 aa).

The protein belongs to the NusB family.

In terms of biological role, involved in transcription antitermination. Required for transcription of ribosomal RNA (rRNA) genes. Binds specifically to the boxA antiterminator sequence of the ribosomal RNA (rrn) operons. The protein is Transcription antitermination protein NusB of Herpetosiphon aurantiacus (strain ATCC 23779 / DSM 785 / 114-95).